The following is a 290-amino-acid chain: Diaminopimelate epimerase (290 aa).

N14 and N67 together coordinate substrate. The active-site Proton donor is C76. Substrate-binding positions include 77-78 (GN), N166, N199, and 217-218 (ER). C226 functions as the Proton acceptor in the catalytic mechanism. A substrate-binding site is contributed by 227 to 228 (GT).

It belongs to the diaminopimelate epimerase family. In terms of assembly, homodimer.

It is found in the cytoplasm. The enzyme catalyses (2S,6S)-2,6-diaminopimelate = meso-2,6-diaminopimelate. The protein operates within amino-acid biosynthesis; L-lysine biosynthesis via DAP pathway; DL-2,6-diaminopimelate from LL-2,6-diaminopimelate: step 1/1. Its function is as follows. Catalyzes the stereoinversion of LL-2,6-diaminopimelate (L,L-DAP) to meso-diaminopimelate (meso-DAP), a precursor of L-lysine and an essential component of the bacterial peptidoglycan. The protein is Diaminopimelate epimerase of Geobacillus kaustophilus (strain HTA426).